The chain runs to 168 residues: Peptide deformylase (168 aa).

Residues Cys92 and His134 each coordinate Fe cation. Residue Glu135 is part of the active site. His138 contacts Fe cation.

It belongs to the polypeptide deformylase family. Fe(2+) serves as cofactor.

It catalyses the reaction N-terminal N-formyl-L-methionyl-[peptide] + H2O = N-terminal L-methionyl-[peptide] + formate. Functionally, removes the formyl group from the N-terminal Met of newly synthesized proteins. Requires at least a dipeptide for an efficient rate of reaction. N-terminal L-methionine is a prerequisite for activity but the enzyme has broad specificity at other positions. The polypeptide is Peptide deformylase (Teredinibacter turnerae (strain ATCC 39867 / T7901)).